The chain runs to 427 residues: Glutamate-1-semialdehyde 2,1-aminomutase (427 aa).

K265 is subject to N6-(pyridoxal phosphate)lysine.

The protein belongs to the class-III pyridoxal-phosphate-dependent aminotransferase family. HemL subfamily. As to quaternary structure, homodimer. Requires pyridoxal 5'-phosphate as cofactor.

The protein resides in the cytoplasm. It carries out the reaction (S)-4-amino-5-oxopentanoate = 5-aminolevulinate. The protein operates within porphyrin-containing compound metabolism; protoporphyrin-IX biosynthesis; 5-aminolevulinate from L-glutamyl-tRNA(Glu): step 2/2. In Pseudomonas putida (strain GB-1), this protein is Glutamate-1-semialdehyde 2,1-aminomutase.